Here is a 117-residue protein sequence, read N- to C-terminus: Hemerythrin subunit beta (117 aa).

Fe cation-binding residues include histidine 24, histidine 53, glutamate 57, histidine 72, histidine 76, histidine 105, and aspartate 110.

The protein belongs to the hemerythrin family. As to quaternary structure, octamer composed of two types of chains: alpha and beta.

Its function is as follows. Hemerythrin is a respiratory protein in blood cells of certain marine worms. The oxygen-binding site in each chain contains two iron atoms. This Lingula anatina (Brachiopod) protein is Hemerythrin subunit beta.